A 427-amino-acid chain; its full sequence is Trigger factor (427 aa).

A PPIase FKBP-type domain is found at 160 to 240 (TDTVIGDVVK…VKEVKRLELP (81 aa)).

It belongs to the FKBP-type PPIase family. Tig subfamily.

The protein localises to the cytoplasm. The catalysed reaction is [protein]-peptidylproline (omega=180) = [protein]-peptidylproline (omega=0). Involved in protein export. Acts as a chaperone by maintaining the newly synthesized protein in an open conformation. Functions as a peptidyl-prolyl cis-trans isomerase. The chain is Trigger factor from Chlorobium limicola (strain DSM 245 / NBRC 103803 / 6330).